Consider the following 650-residue polypeptide: Acetyl-coenzyme A synthetase (650 aa).

Residues 191–194, Thr-311, and Asn-335 contribute to the CoA site; that span reads RGGR. ATP-binding positions include 387–389, 411–416, Asp-500, and Arg-515; these read GEP and DTWWQT. Ser-523 is a CoA binding site. Residue Arg-526 coordinates ATP. The Mg(2+) site is built by Val-537, His-539, and Val-542. A CoA-binding site is contributed by Arg-584. Lys-609 is subject to N6-acetyllysine.

This sequence belongs to the ATP-dependent AMP-binding enzyme family. Requires Mg(2+) as cofactor. Acetylated. Deacetylation by the SIR2-homolog deacetylase activates the enzyme.

The catalysed reaction is acetate + ATP + CoA = acetyl-CoA + AMP + diphosphate. In terms of biological role, catalyzes the conversion of acetate into acetyl-CoA (AcCoA), an essential intermediate at the junction of anabolic and catabolic pathways. AcsA undergoes a two-step reaction. In the first half reaction, AcsA combines acetate with ATP to form acetyl-adenylate (AcAMP) intermediate. In the second half reaction, it can then transfer the acetyl group from AcAMP to the sulfhydryl group of CoA, forming the product AcCoA. The sequence is that of Acetyl-coenzyme A synthetase from Shewanella baltica (strain OS195).